A 784-amino-acid chain; its full sequence is Lon protease (784 aa).

Positions 6–207 constitute a Lon N-terminal domain; it reads LPLMALRDMV…TVITTLTSNI (202 aa). 356-363 is a binding site for ATP; it reads GPPGVGKT. The Lon proteolytic domain occupies 592–773; that stretch reads EDQIGSTTGL…DQVLKHALVE (182 aa). Residues S679 and K722 contribute to the active site.

It belongs to the peptidase S16 family. As to quaternary structure, homohexamer. Organized in a ring with a central cavity.

The protein localises to the cytoplasm. It catalyses the reaction Hydrolysis of proteins in presence of ATP.. Its function is as follows. ATP-dependent serine protease that mediates the selective degradation of mutant and abnormal proteins as well as certain short-lived regulatory proteins. Required for cellular homeostasis and for survival from DNA damage and developmental changes induced by stress. Degrades polypeptides processively to yield small peptide fragments that are 5 to 10 amino acids long. Binds to DNA in a double-stranded, site-specific manner. The polypeptide is Lon protease (Rickettsia typhi (strain ATCC VR-144 / Wilmington)).